A 626-amino-acid chain; its full sequence is MSKKGRSKGDKPEAETDSVQMANEELRAKLTNIQIEFQQEKSKVGKLRERLQEAKLEREQEQRRHTAYISELKAKLHEEKTKELQALREALIRQHEQEAARTAKIKEGELQRLQATLNVLRDGAADKVKTALLADAREEARRTFDGERQRLQQEILELKAARKQAEEALSNCMQADKAKAADLRAAYQAHQDEVHRIKRECERDIRRLMDEIKGKERVILALEKELGVQTGQTQRLLLQKEALDEQLVQVKEAERHHSSPKRELPPGIGDMAELMGGQDQHMDERDVRRFQLKIAELNSVIRKLEDRNTLLADERNELLKRSRETEVQLKPLVEKNKRMNKKNEELLHSIQRMEEKLKSLTRENVEMKEKLSAQASLKRHTSLNDLSLTRDEQEIEFLRLQVLEQQHVIDDLSLERERLLRSKRHRGKSLKPPKKHVVETFFGFDEESVDSETLSETSYNTDRTDRTPATPEEDLDETTTREEADLRFCQLTREYQALQRAYALLQEQVGGTLDAEREARTREQLQADLLRCQAKIEDLEKLLVEKGQDAAWVEEKQVLMRTNQDLLEKIYRLEMEENQLKSEMQDAKDQNELLEFRVLELEVRDSICCKLSNGADILFEPKLKFM.

Positions 1-25 are disordered; that stretch reads MSKKGRSKGDKPEAETDSVQMANEE. The mediates association with microtubules stretch occupies residues 1 to 365; sequence MSKKGRSKGD…KLKSLTRENV (365 aa). Coiled-coil stretches lie at residues 13–255 and 284–413; these read EAET…EAER and ERDV…DDLS. The tract at residues 365–626 is mediates interaction with TYK2 and GABBR1; that stretch reads VEMKEKLSAQ…ILFEPKLKFM (262 aa). Residue Ser382 is modified to Phosphoserine. The span at 452 to 461 shows a compositional bias: polar residues; sequence ETLSETSYNT. The disordered stretch occupies residues 452 to 481; sequence ETLSETSYNTDRTDRTPATPEEDLDETTTR. Thr470 is subject to Phosphothreonine. Positions 490 to 604 form a coiled coil; that stretch reads QLTREYQALQ…EFRVLELEVR (115 aa).

It belongs to the JAKMIP family. Homodimer. Interacts with JAK1 and TYK2. Forms a complex with GABBR1 and KIF5B/kinesin-1. Post-translationally, phosphorylated.

Its subcellular location is the cytoplasm. The protein localises to the cytoskeleton. It is found in the membrane. Associates with microtubules and may play a role in the microtubule-dependent transport of the GABA-B receptor. May play a role in JAK1 signaling and regulate microtubule cytoskeleton rearrangements. The sequence is that of Janus kinase and microtubule-interacting protein 1 (Jakmip1) from Mus musculus (Mouse).